A 388-amino-acid chain; its full sequence is Aldolase vrtJ (388 aa).

The residue at position 241 (Lys241) is an N6-(pyridoxal phosphate)lysine.

The protein belongs to the threonine aldolase family. Pyridoxal 5'-phosphate is required as a cofactor.

Its pathway is secondary metabolite biosynthesis; terpenoid biosynthesis. Functionally, aldolase; part of the gene cluster that mediates the biosynthesis of viridicatumtoxin, a tetracycline-like fungal meroterpenoid with a unique, fused spirobicyclic ring system. The first step of the pathway is the production of the malonamoyl-CoA starter unit for the polyketide synthase vrtA. The aldolase vrtJ may be involved in the synthesis of the malonamate substrate for malonamoyl-CoA synthetase vrtB. The polyketide synthase vrtA then may utilize the malonamoyl-CoA starter unit, followed by sequential condensation of eight malonyl-CoA units to form the polyketide backbone. The cyclization of the last ring could be mediated by the lactamase-like protein vrtG. The proposed post-PKS tailoring steps are a hydroxylation at C5 catalyzed the cytochrome P450 monooxygenase vrtE, a hydroxylation at C12a catalyzed by VrtH and/or VrtI, and an O-methylation by the O-methyltransferase vrtF. VrtC is then proposed to catalyze the transfer of a geranyl group synthesized by vrtD to the aromatic C ring of the tetracyclic polyketide intermediate of viridicatumtoxin to yield previridicatumtoxin. Finally, the cytochrome P450 monooxygenase vrtK catalyzes the spirocyclization of the geranyl moiety of previridicatumtoxin to afford viridicatumtoxin. This Penicillium aethiopicum protein is Aldolase vrtJ.